Consider the following 464-residue polypeptide: MSLHLHDTATRTMREFHPRLAGVASIYVCGATVQGVPHIGHVRGGLNYDVLRRWLVHNGYDVRLVRNVTDIDDKILTKAADAGRPWWEWATAHERAFESAFDRLGCLPPSALPRATGHITQMIELMQRLIDKGHAYAAGGDVYFSVASYAEHYGRLSGQRLDEVQQGESTASGKRDPRDFTLWKAAKPGEPSWPTPWGDGRPGWHLECSAMSTYYLGSEFDIHGGGLDLVFPHHENELAQSTAAGDGFARYWMHNAWVTMSGEKMSKSLGNTVAIPAILQRAAAPEIRYYLVAPHYRSTIEYSEPALAEAISAYRRIDSFVNRVRQRTGEVGHGTVPAEFAAAMDDDLSTPQAIAVVHNAIRESNAALDRGDDRAANEAAASVRTMTDILGLDPLSEQWADTRGADDAAHHALSELVGSMLQQRQQARAERDFATADAVRDRLQACGIAVEDTPDGPLWTLKDG.

Cys-29 is a Zn(2+) binding site. The 'HIGH' region motif lies at Ala-31–His-41. The interval Arg-160–Phe-180 is disordered. The Zn(2+) site is built by Cys-208, His-233, and Glu-237. The 'KMSKS' region motif lies at Lys-264–Ser-268. Lys-267 is an ATP binding site.

The protein belongs to the class-I aminoacyl-tRNA synthetase family. Monomer. It depends on Zn(2+) as a cofactor.

Its subcellular location is the cytoplasm. It catalyses the reaction tRNA(Cys) + L-cysteine + ATP = L-cysteinyl-tRNA(Cys) + AMP + diphosphate. The chain is Cysteine--tRNA ligase from Saccharopolyspora erythraea (strain ATCC 11635 / DSM 40517 / JCM 4748 / NBRC 13426 / NCIMB 8594 / NRRL 2338).